A 331-amino-acid chain; its full sequence is MGNSIYRFLCGLCSPSPEYQPHGAHPAVAALGRDIQQFEATSQVPDGLSRHVVSSKKAQANWYKKLIVTWKKARPTPRTPEEAARLVVTTLKNHQKADVEGFLVFYGLPIPNAAASTPAPHTAHVPKPQGCKFELHTLPVDAKAVADGDTITVYIDTADPRESGNVPREIQKAAAERTRARAARDYQKADGLQKMIADAGYRQVPNARGEEVLAKKYRIRLRGIDAPESAMPYGKEAKEALLKMVQGKSLKVYVYDEDRYGRCVGDIYCDGVFVQEQMLKKGCAWHYTAYDQRPELAKWEKQAQSGRKGLWAASRPQKPWEWRRDKRNGTA.

Glycine 2 is lipidated: N-myristoyl glycine. Cysteine 10 carries S-palmitoyl cysteine lipidation. Residues 136 to 313 (HTLPVDAKAV…QSGRKGLWAA (178 aa)) form the TNase-like domain. Residue aspartate 149 coordinates Ca(2+). The active site involves arginine 220. Residue aspartate 225 participates in Ca(2+) binding. Active-site residues include glutamate 228 and arginine 262. The tract at residues 306–331 (GRKGLWAASRPQKPWEWRRDKRNGTA) is disordered. A compositionally biased stretch (basic and acidic residues) spans 318-331 (KPWEWRRDKRNGTA).

Belongs to the thermonuclease family. Ca(2+) is required as a cofactor.

The protein localises to the cell membrane. In terms of biological role, enzyme that catalyzes the hydrolysis of both DNA and RNA at the 5' position of the phosphodiester bond. The sequence is that of Probable staphylococcal-like nuclease CAN1 from Oryza sativa subsp. japonica (Rice).